A 105-amino-acid polypeptide reads, in one-letter code: uncharacterized protein (105 aa).

A helical membrane pass occupies residues 13-35 (LLFAFVVVIVVLTLSYVYAQNII).

The protein resides in the membrane. This is an uncharacterized protein from Archaeoglobus fulgidus (strain ATCC 49558 / DSM 4304 / JCM 9628 / NBRC 100126 / VC-16).